Consider the following 185-residue polypeptide: Photosystem I assembly protein Ycf4 (185 aa).

2 consecutive transmembrane segments (helical) span residues Tyr-24–Ser-44 and Ile-66–Val-86.

Belongs to the Ycf4 family.

Its subcellular location is the cellular thylakoid membrane. Its function is as follows. Seems to be required for the assembly of the photosystem I complex. The chain is Photosystem I assembly protein Ycf4 from Prochlorococcus marinus (strain MIT 9301).